The sequence spans 592 residues: Pyruvate decarboxylase 3 (592 aa).

Positions 54 and 141 each coordinate substrate. The tract at residues 419–501 is thiamine pyrophosphate binding; it reads DSWFNCQKLK…FLINNGGYTI (83 aa). Mg(2+) contacts are provided by Asp-469, Asn-496, and Gly-498. Glu-502 serves as a coordination point for substrate.

It belongs to the TPP enzyme family. Homotetramer. Requires a metal cation as cofactor. It depends on thiamine diphosphate as a cofactor. In terms of tissue distribution, expressed at low levels in roots and shoots.

The enzyme catalyses a 2-oxocarboxylate + H(+) = an aldehyde + CO2. The polypeptide is Pyruvate decarboxylase 3 (PDC3) (Arabidopsis thaliana (Mouse-ear cress)).